A 204-amino-acid polypeptide reads, in one-letter code: Recombination protein RecR (204 aa).

The C4-type zinc finger occupies 63-78 (CRRCFNITVGELCAIC). The Toprim domain maps to 86-181 (TKICVVEEPL…RVTRPARGLP (96 aa)).

The protein belongs to the RecR family.

Its function is as follows. May play a role in DNA repair. It seems to be involved in an RecBC-independent recombinational process of DNA repair. It may act with RecF and RecO. The sequence is that of Recombination protein RecR from Chloroflexus aurantiacus (strain ATCC 29366 / DSM 635 / J-10-fl).